Reading from the N-terminus, the 155-residue chain is Small ribosomal subunit protein uS7c (155 aa).

It belongs to the universal ribosomal protein uS7 family. Part of the 30S ribosomal subunit.

It is found in the plastid. Its subcellular location is the chloroplast. Its function is as follows. One of the primary rRNA binding proteins, it binds directly to 16S rRNA where it nucleates assembly of the head domain of the 30S subunit. This chain is Small ribosomal subunit protein uS7c (rps7), found in Stewartia pseudocamellia (Japanese stewartia).